The chain runs to 475 residues: Aspartic proteinase 39 (475 aa).

The first 23 residues, 1 to 23 (MELRRKLCIVVAVFVIVIEFASA), serve as a signal peptide directing secretion. Residues 74–422 (YFTKIKLGSP…DLDNEVIGWA (349 aa)) enclose the Peptidase A1 domain. Aspartate 92 is a catalytic residue. 2 N-linked (GlcNAc...) asparagine glycosylation sites follow: asparagine 124 and asparagine 222. The active site involves aspartate 303. Residues asparagine 425 and asparagine 446 are each glycosylated (N-linked (GlcNAc...) asparagine). Serine 449 carries the GPI-anchor amidated serine lipid modification. Residues 450 to 475 (APRLLMITKLLTILSPLIVMAFTSLA) constitute a propeptide, removed in mature form.

It belongs to the peptidase A1 family. In terms of tissue distribution, highly expressed in pollen and pollen tubes. Mostly expressed in inflorescence, flowers and siliques, and barely in leaves and seedlings.

It is found in the cell membrane. It localises to the cytoplasm. Its subcellular location is the cytosol. Its function is as follows. Displays aspartic proteolytic activity. Together with A36, contributes to pollen and ovule development, including the apical cell wall constitution of the growing pollen tubes. This Arabidopsis thaliana (Mouse-ear cress) protein is Aspartic proteinase 39.